A 347-amino-acid chain; its full sequence is Spermidine/putrescine import ATP-binding protein PotA (347 aa).

Residues 6-238 (LEIKNLSHYY…PKTKFVADFI (233 aa)) enclose the ABC transporter domain. 40 to 47 (GPSGCGKT) is a binding site for ATP.

The protein belongs to the ABC transporter superfamily. Spermidine/putrescine importer (TC 3.A.1.11.1) family. The complex is composed of two ATP-binding proteins (PotA), two transmembrane proteins (PotB and PotC) and a solute-binding protein (PotD).

It localises to the cell inner membrane. It catalyses the reaction ATP + H2O + polyamine-[polyamine-binding protein]Side 1 = ADP + phosphate + polyamineSide 2 + [polyamine-binding protein]Side 1.. Part of the ABC transporter complex PotABCD involved in spermidine/putrescine import. Responsible for energy coupling to the transport system. In Borreliella afzelii (strain PKo) (Borrelia afzelii), this protein is Spermidine/putrescine import ATP-binding protein PotA.